A 718-amino-acid chain; its full sequence is MLFSLRRLKKLANLEAFSDQKVIDSLINLGFEVDQITKLNEISGIKFGQILEIRKNPEADNLWICKVQFADKIREIQTTAKNVIENKQVLAFIPGSKSGNTTFLAKKLRGHISEGMLISAAELGFNKHLLNSELDQGVLVFDPIFDLESNPLKVLELDDLILDIKLLWNRPDGNSYLVLANELAAFFKTDFSLINKEITGKFYSELKIINKTDSKIFALEIQKLPKLALVDIFLLLKSEVKIDNLAQNFANFILIYTGQPCYCLQLEKNQQKVELIEQKVKIKYEPDAISSYHFLDQEKKPLLIPEFSDQIIMENNSFFLIMPKFNLLKVKQIKQFLKKNSLKLTQLGKNYNYGTTFIALSFLNFFLEDQKIDFSWPINFDKSLISKKTFLDLNYNELKEILGLELSQEDISKTNLILEKIGYNFDNTSFSPPFYRVDIEFFADYAADFLRFYGLEKLKDCKLEQVKAKIPNPDFEPVKLKTLGYYETNSFLLISKKEDFNPLELKSQDLLTFPSQEHTKIRYSLAWQLAKITKYNQKRKITEINLYEKGSIAGWNHSLALASTIYTSEDLKKHLKILYNYDFDFLPADSEFLNPEKSQFIYLDNVLVGWLGQVVEKYNYENVTFLEILLSKVEKIPKKEGGKIKFRPYDNSQLKYRDITLSLPMKDIPDPYLKVIQKIPEIFSVKLINYVIINNQQKITYRITGPDQVCAEIDKFYK.

In terms of domain architecture, tRNA-binding spans 39-153 (LNEISGIKFG…IFDLESNPLK (115 aa)). A B5 domain is found at 386 to 460 (SKKTFLDLNY…RFYGLEKLKD (75 aa)). The Mg(2+) site is built by D438, D444, and D448.

The protein belongs to the phenylalanyl-tRNA synthetase beta subunit family. Type 1 subfamily. As to quaternary structure, tetramer of two alpha and two beta subunits. The cofactor is Mg(2+).

Its subcellular location is the cytoplasm. It catalyses the reaction tRNA(Phe) + L-phenylalanine + ATP = L-phenylalanyl-tRNA(Phe) + AMP + diphosphate + H(+). The protein is Phenylalanine--tRNA ligase beta subunit of Mesomycoplasma hyopneumoniae (strain 7448) (Mycoplasma hyopneumoniae).